The sequence spans 352 residues: MSAKTNPGNFFEDFRLGQTIVHATPRTITEGDVALYTSLYGSRFALTSSTPFAQSLGLERAPIDSLLVFHIVFGKTVPDISLNAIANLGYAGGRFGAVVYPGDTLSTTSKVIGLRQNKDGKTGVVYVHSVGVNQWDEVVLEYIRWVMVRKRDPNAPAPETVVPDLPDSVPVTDLTVPYTVSAANYNLAHAGSNYLWDDYEVGEKIDHVDGVTIEEAEHMQATRLYQNTARVHFNLHVEREGRFGRRIVYGGHIISLARSLSFNGLANALSIAAINSGRHTNPSFAGDTIYAWSEILAKMAIPGRTDIGALRVRTVATKDRPCHDFPYRDAEGNYDPAVVLDFDYTVLMPRRG.

The region spanning 16–129 (LGQTIVHATP…GKTGVVYVHS (114 aa)) is the MaoC-like domain. Substrate-binding positions include 62–65 (PIDS), 85–88 (IANL), and 96–98 (GAV).

As to quaternary structure, homodimer.

It catalyses the reaction (2R,3S)-beta-methylmalyl-CoA = 2-methylfumaryl-CoA + H2O. In terms of biological role, involved in the glyoxylate assimilation cycle used to regenerate acetyl-CoA and produce pyruvate as universal precursor for biosynthesis. Catalyzes the reversible dehydration of beta-methylmalyl-CoA ((2R,3S)-beta-methylmalyl-CoA) to yield mesaconyl-CoA (2-methylfumaryl-CoA). In Chloroflexus aurantiacus (strain ATCC 29366 / DSM 635 / J-10-fl), this protein is Beta-methylmalyl-CoA dehydratase (mch).